The following is a 179-amino-acid chain: Large ribosomal subunit protein uL5 (179 aa).

It belongs to the universal ribosomal protein uL5 family. Part of the 50S ribosomal subunit; part of the 5S rRNA/L5/L18/L25 subcomplex. Contacts the 5S rRNA and the P site tRNA. Forms a bridge to the 30S subunit in the 70S ribosome.

Its function is as follows. This is one of the proteins that bind and probably mediate the attachment of the 5S RNA into the large ribosomal subunit, where it forms part of the central protuberance. In the 70S ribosome it contacts protein S13 of the 30S subunit (bridge B1b), connecting the 2 subunits; this bridge is implicated in subunit movement. Contacts the P site tRNA; the 5S rRNA and some of its associated proteins might help stabilize positioning of ribosome-bound tRNAs. The polypeptide is Large ribosomal subunit protein uL5 (Vibrio campbellii (strain ATCC BAA-1116)).